We begin with the raw amino-acid sequence, 319 residues long: Cell division protein FtsN (319 aa).

The interval 1 to 30 is disordered; the sequence is MAQRDYVRRSQPAPSRRKKSTSRKKQRNLP. Residues 1 to 33 lie on the Cytoplasmic side of the membrane; sequence MAQRDYVRRSQPAPSRRKKSTSRKKQRNLPAVS. Positions 4–6 are mediates interaction with FtsA; it reads RDY. A compositionally biased stretch (basic residues) spans 15–27; the sequence is SRRKKSTSRKKQR. A helical transmembrane segment spans residues 34-54; it reads PAMVAIAAAVLVTFIGGLYFI. Over 55–319 the chain is Periplasmic; that stretch reads THHKKEESET…TNCIRLAAGG (265 aa). Disordered regions lie at residues 60 to 79 and 89 to 113; these read EESE…PPKP and LESR…TPEQ. Repeat copies occupy residues 115–120, 145–150, 197–200, and 220–223. Positions 115-150 are 2 X 6 AA repeats; the sequence is TPEQRQLLEQMQADMRQQPTQLVEVPWNEQTPEQRQ. Residues 140–245 form a disordered region; it reads PWNEQTPEQR…PKPTAEKKDE (106 aa). Residues 143 to 171 are compositionally biased toward low complexity; sequence EQTPEQRQQTLQRQRQAQQLAEQQRLAQQ. Polar residues predominate over residues 172-221; that stretch reads SRTTEQSWQQQTRTSQAAPVQAQPRQSKPASSQQPYQDLLQTPAHTTAQS. The interval 197 to 223 is 2 X 4 AA repeats; sequence QSKPASSQQPYQDLLQTPAHTTAQSKP. Positions 222–238 are enriched in low complexity; the sequence is KPQQAAPVARAADAPKP. The region spanning 242-316 is the SPOR domain; sequence KKDERRWMVQ…AGHTNCIRLA (75 aa). The cysteines at positions 252 and 312 are disulfide-linked.

It belongs to the FtsN family. Interacts with FtsA via its N-terminal cytoplasmic domain. Interacts with ZapA, FtsQ, FtsW and FtsI.

It is found in the cell inner membrane. In terms of biological role, essential cell division protein that activates septal peptidoglycan synthesis and constriction of the cell. Acts on both sides of the membrane, via interaction with FtsA in the cytoplasm and interaction with the FtsQBL complex in the periplasm. These interactions may induce a conformational switch in both FtsA and FtsQBL, leading to septal peptidoglycan synthesis by FtsI and associated synthases. Required for full FtsI activity. Required for recruitment of AmiC to the septal ring. This chain is Cell division protein FtsN, found in Escherichia coli (strain K12).